The following is a 283-amino-acid chain: Putative ABC transporter ATP-binding protein MA_4342 (283 aa).

One can recognise an ABC transporter domain in the interval 3–238 (IILENVSFFY…KNVPLPPVTS (236 aa)). An ATP-binding site is contributed by 40 to 47 (GEKGAGKS).

The protein belongs to the ABC transporter superfamily.

It localises to the cell membrane. In terms of biological role, probably part of an ABC transporter complex. Responsible for energy coupling to the transport system. The protein is Putative ABC transporter ATP-binding protein MA_4342 of Methanosarcina acetivorans (strain ATCC 35395 / DSM 2834 / JCM 12185 / C2A).